A 447-amino-acid chain; its full sequence is Protein cortex (447 aa).

WD repeat units follow at residues 108 to 148 (TYSY…IGHG), 149 to 188 (FAEYEIQCCKFDPRGELLALGTYMKTLEIHNNSKSKKIMS), 198 to 237 (NMNCSITAVDWSPTGNSFAAGCSGGAVTSFTRAAKLISWR), 281 to 325 (DSDW…VRDT), 344 to 380 (GELVLSMWHSDRATLHPKTCSQLVVLSDPDTMVDQWG), and 384 to 423 (SGLDRVRTMIFSPDGTKLATATTDEDLIIWNFLPEDNKMK). A D-box motif is present at residues 384 to 395 (SGLDRVRTMIFS).

This sequence belongs to the WD repeat CORT family.

It localises to the cytoplasm. Controls wing pigmentation patterning by regulating scale cell development, thereby playing a key role in mimicry and crypsis. Probably acts as an activator of the anaphase promoting complex/cyclosome (APC/C) that promotes the ubiquitin ligase activity and substrate specificity of the APC/C. The chain is Protein cortex from Heliconius melpomene (Postman butterfly).